We begin with the raw amino-acid sequence, 291 residues long: Phosphatidylglycerol--prolipoprotein diacylglyceryl transferase (291 aa).

7 helical membrane passes run 21-41, 60-80, 96-116, 124-144, 198-218, 225-245, and 258-278; these read IALH…MWLA, LLYA…VLFY, WDGG…MWWF, FLQV…MGRI, SQLY…NLYI, GSVS…VEFF, and ISMG…MMIW. An a 1,2-diacyl-sn-glycero-3-phospho-(1'-sn-glycerol)-binding site is contributed by R143.

This sequence belongs to the Lgt family.

It localises to the cell inner membrane. It carries out the reaction L-cysteinyl-[prolipoprotein] + a 1,2-diacyl-sn-glycero-3-phospho-(1'-sn-glycerol) = an S-1,2-diacyl-sn-glyceryl-L-cysteinyl-[prolipoprotein] + sn-glycerol 1-phosphate + H(+). It functions in the pathway protein modification; lipoprotein biosynthesis (diacylglyceryl transfer). Its function is as follows. Catalyzes the transfer of the diacylglyceryl group from phosphatidylglycerol to the sulfhydryl group of the N-terminal cysteine of a prolipoprotein, the first step in the formation of mature lipoproteins. This chain is Phosphatidylglycerol--prolipoprotein diacylglyceryl transferase, found in Photorhabdus laumondii subsp. laumondii (strain DSM 15139 / CIP 105565 / TT01) (Photorhabdus luminescens subsp. laumondii).